We begin with the raw amino-acid sequence, 113 residues long: Nascent polypeptide-associated complex protein (113 aa).

Residues 5–73 enclose the NAC-A/B domain; it reads GMNPAKMKQM…AKEVPKSLEI (69 aa).

This sequence belongs to the NAC-alpha family. In terms of assembly, homodimer. Interacts with the ribosome. Binds ribosomal RNA.

Contacts the emerging nascent chain on the ribosome. This chain is Nascent polypeptide-associated complex protein, found in Methanosarcina acetivorans (strain ATCC 35395 / DSM 2834 / JCM 12185 / C2A).